The following is a 386-amino-acid chain: Succinate--CoA ligase [ADP-forming] subunit beta (386 aa).

An ATP-grasp domain is found at 9 to 244 (KELLKQFGVP…LDEEDPAEIE (236 aa)). ATP is bound by residues Lys46, 53-55 (GRG), Glu99, Ala102, and Glu107. Mg(2+) contacts are provided by Asn199 and Asp213. Residues Asn264 and 321–323 (GIM) contribute to the substrate site.

The protein belongs to the succinate/malate CoA ligase beta subunit family. As to quaternary structure, heterotetramer of two alpha and two beta subunits. The cofactor is Mg(2+).

The catalysed reaction is succinate + ATP + CoA = succinyl-CoA + ADP + phosphate. It carries out the reaction GTP + succinate + CoA = succinyl-CoA + GDP + phosphate. The protein operates within carbohydrate metabolism; tricarboxylic acid cycle; succinate from succinyl-CoA (ligase route): step 1/1. Functionally, succinyl-CoA synthetase functions in the citric acid cycle (TCA), coupling the hydrolysis of succinyl-CoA to the synthesis of either ATP or GTP and thus represents the only step of substrate-level phosphorylation in the TCA. The beta subunit provides nucleotide specificity of the enzyme and binds the substrate succinate, while the binding sites for coenzyme A and phosphate are found in the alpha subunit. The sequence is that of Succinate--CoA ligase [ADP-forming] subunit beta from Bordetella petrii (strain ATCC BAA-461 / DSM 12804 / CCUG 43448).